The chain runs to 293 residues: Ribokinase (293 aa).

Substrate contacts are provided by residues 11–13, 39–43, and Glu139; these read SMD and GKGAN. Residues Asn183 and 210 to 215 each bind ATP; that span reads TEGKQG. K(+) contacts are provided by Asp236 and Thr238. ATP-binding positions include 241–242 and Asn266; that span reads GD. Asp242 contacts substrate. The active-site Proton acceptor is Asp242. 3 residues coordinate K(+): Ser272, Ser275, and Gly277.

This sequence belongs to the carbohydrate kinase PfkB family. Ribokinase subfamily. In terms of assembly, homodimer. It depends on Mg(2+) as a cofactor.

The protein localises to the cytoplasm. It carries out the reaction D-ribose + ATP = D-ribose 5-phosphate + ADP + H(+). Its pathway is carbohydrate metabolism; D-ribose degradation; D-ribose 5-phosphate from beta-D-ribopyranose: step 2/2. Its activity is regulated as follows. Activated by a monovalent cation that binds near, but not in, the active site. The most likely occupant of the site in vivo is potassium. Ion binding induces a conformational change that may alter substrate affinity. Functionally, catalyzes the phosphorylation of ribose at O-5 in a reaction requiring ATP and magnesium. The resulting D-ribose-5-phosphate can then be used either for sythesis of nucleotides, histidine, and tryptophan, or as a component of the pentose phosphate pathway. The chain is Ribokinase from Bacillus subtilis (strain 168).